Here is a 171-residue protein sequence, read N- to C-terminus: 3-hydroxydecanoyl-[acyl-carrier-protein] dehydratase (171 aa).

Histidine 70 is a catalytic residue.

Belongs to the thioester dehydratase family. FabA subfamily. As to quaternary structure, homodimer.

The protein resides in the cytoplasm. The enzyme catalyses a (3R)-hydroxyacyl-[ACP] = a (2E)-enoyl-[ACP] + H2O. It carries out the reaction (3R)-hydroxydecanoyl-[ACP] = (2E)-decenoyl-[ACP] + H2O. The catalysed reaction is (2E)-decenoyl-[ACP] = (3Z)-decenoyl-[ACP]. It functions in the pathway lipid metabolism; fatty acid biosynthesis. Necessary for the introduction of cis unsaturation into fatty acids. Catalyzes the dehydration of (3R)-3-hydroxydecanoyl-ACP to E-(2)-decenoyl-ACP and then its isomerization to Z-(3)-decenoyl-ACP. Can catalyze the dehydratase reaction for beta-hydroxyacyl-ACPs with saturated chain lengths up to 16:0, being most active on intermediate chain length. This Shewanella putrefaciens (strain CN-32 / ATCC BAA-453) protein is 3-hydroxydecanoyl-[acyl-carrier-protein] dehydratase.